A 502-amino-acid chain; its full sequence is ATP synthase subunit alpha (502 aa).

The tract at residues 115–139 (VDGLGPVETTETRPIESPAPGVMDR) is disordered. Residue 169 to 176 (GDRQTGKT) coordinates ATP.

Belongs to the ATPase alpha/beta chains family. As to quaternary structure, F-type ATPases have 2 components, CF(1) - the catalytic core - and CF(0) - the membrane proton channel. CF(1) has five subunits: alpha(3), beta(3), gamma(1), delta(1), epsilon(1). CF(0) has three main subunits: a(1), b(2) and c(9-12). The alpha and beta chains form an alternating ring which encloses part of the gamma chain. CF(1) is attached to CF(0) by a central stalk formed by the gamma and epsilon chains, while a peripheral stalk is formed by the delta and b chains.

Its subcellular location is the cell membrane. It catalyses the reaction ATP + H2O + 4 H(+)(in) = ADP + phosphate + 5 H(+)(out). Its function is as follows. Produces ATP from ADP in the presence of a proton gradient across the membrane. The alpha chain is a regulatory subunit. This Geobacillus thermodenitrificans (strain NG80-2) protein is ATP synthase subunit alpha.